We begin with the raw amino-acid sequence, 199 residues long: Proteasome subunit beta 2 (199 aa).

The propeptide at 1–6 (MEKKTG) is removed in mature form; by autocatalysis. Thr7 (nucleophile) is an active-site residue.

The protein belongs to the peptidase T1B family. As to quaternary structure, the 20S proteasome core is composed of 14 alpha and 14 beta subunits that assemble into four stacked heptameric rings, resulting in a barrel-shaped structure. The two inner rings, each composed of seven catalytic beta subunits, are sandwiched by two outer rings, each composed of seven alpha subunits. The catalytic chamber with the active sites is on the inside of the barrel. Has a gated structure, the ends of the cylinder being occluded by the N-termini of the alpha-subunits. Is capped at one or both ends by the proteasome regulatory ATPase, PAN.

It localises to the cytoplasm. It catalyses the reaction Cleavage of peptide bonds with very broad specificity.. Its activity is regulated as follows. The formation of the proteasomal ATPase PAN-20S proteasome complex, via the docking of the C-termini of PAN into the intersubunit pockets in the alpha-rings, triggers opening of the gate for substrate entry. Interconversion between the open-gate and close-gate conformations leads to a dynamic regulation of the 20S proteasome proteolysis activity. Component of the proteasome core, a large protease complex with broad specificity involved in protein degradation. This is Proteasome subunit beta 2 from Thermococcus kodakarensis (strain ATCC BAA-918 / JCM 12380 / KOD1) (Pyrococcus kodakaraensis (strain KOD1)).